Consider the following 877-residue polypeptide: ABC transporter A family member 1 (877 aa).

Helical transmembrane passes span 46-66 (YFSTGIEILSPIAFIIILFLI), 268-288 (VWGGLFYYCGSMISFIFLLYK), 324-344 (ILISLITIIVGLACQLPFFLG), 347-367 (FFVLIITFSLFTISMSSVAFF), 379-399 (IGIGMGIFIVGSIFQLVFSGM), 420-440 (IILFFIPMFHFTKVLTDIGNV), and 479-499 (LLALIGVYTVLAWYFEHIIPG). Positions 552–788 (LIICGLSKSY…YGEGYSVNIV (237 aa)) constitute an ABC transporter domain. Position 591–598 (591–598 (GSNGCGKS)) interacts with ATP.

This sequence belongs to the ABC transporter superfamily. ABCA family.

The protein localises to the membrane. This Dictyostelium discoideum (Social amoeba) protein is ABC transporter A family member 1 (abcA1).